The primary structure comprises 237 residues: Ribonuclease PH (237 aa).

Residues R86 and 124 to 126 (GTR) contribute to the phosphate site.

Belongs to the RNase PH family. In terms of assembly, homohexameric ring arranged as a trimer of dimers.

It catalyses the reaction tRNA(n+1) + phosphate = tRNA(n) + a ribonucleoside 5'-diphosphate. Functionally, phosphorolytic 3'-5' exoribonuclease that plays an important role in tRNA 3'-end maturation. Removes nucleotide residues following the 3'-CCA terminus of tRNAs; can also add nucleotides to the ends of RNA molecules by using nucleoside diphosphates as substrates, but this may not be physiologically important. Probably plays a role in initiation of 16S rRNA degradation (leading to ribosome degradation) during starvation. This chain is Ribonuclease PH, found in Cereibacter sphaeroides (strain ATCC 17025 / ATH 2.4.3) (Rhodobacter sphaeroides).